The following is a 350-amino-acid chain: Lipoyl synthase, mitochondrial (350 aa).

7 residues coordinate [4Fe-4S] cluster: Cys-83, Cys-88, Cys-94, Cys-113, Cys-117, Cys-120, and Ser-328. Positions 96-317 constitute a Radical SAM core domain; it reads GGESGTATAT…EKVGNELGFA (222 aa).

Belongs to the radical SAM superfamily. Lipoyl synthase family. [4Fe-4S] cluster is required as a cofactor.

The protein resides in the mitochondrion. It carries out the reaction [[Fe-S] cluster scaffold protein carrying a second [4Fe-4S](2+) cluster] + N(6)-octanoyl-L-lysyl-[protein] + 2 oxidized [2Fe-2S]-[ferredoxin] + 2 S-adenosyl-L-methionine + 4 H(+) = [[Fe-S] cluster scaffold protein] + N(6)-[(R)-dihydrolipoyl]-L-lysyl-[protein] + 4 Fe(3+) + 2 hydrogen sulfide + 2 5'-deoxyadenosine + 2 L-methionine + 2 reduced [2Fe-2S]-[ferredoxin]. It participates in protein modification; protein lipoylation via endogenous pathway; protein N(6)-(lipoyl)lysine from octanoyl-[acyl-carrier-protein]: step 2/2. In terms of biological role, catalyzes the radical-mediated insertion of two sulfur atoms into the C-6 and C-8 positions of the octanoyl moiety bound to the lipoyl domains of lipoate-dependent enzymes, thereby converting the octanoylated domains into lipoylated derivatives. The sequence is that of Lipoyl synthase, mitochondrial from Trichoplax adhaerens (Trichoplax reptans).